A 406-amino-acid polypeptide reads, in one-letter code: Alpha-1-antitrypsin (406 aa).

The N-terminal stretch at 1–24 (MTSSISWGLLLLAGLCCLVPSFLA) is a signal peptide. The residue at position 33 (serine 33) is a Phosphoserine. N-linked (GlcNAc...) asparagine glycosylation is found at asparagine 59, asparagine 96, and asparagine 260. Residues 362–381 (GTTVLEAVPMSIPPDVCFKN) are RCL. Serine 372 bears the Phosphoserine mark.

Belongs to the serpin family. Interacts with CELA2A. Interacts with ERGIC3 and LMAN1/ERGIC53. Interacts with PRSS1/Trypsin. Plasma.

The protein localises to the secreted. Functionally, inhibitor of serine proteases. Can inhibit elastase, trypsin, chymotrypsin and plasmin. This is Alpha-1-antitrypsin from Meriones unguiculatus (Mongolian jird).